The primary structure comprises 329 residues: GTPase Obg (329 aa).

Positions 1–159 (MQFIDQARIT…WPLQLELKLL (159 aa)) constitute an Obg domain. In terms of domain architecture, OBG-type G spans 160 to 328 (AEVGIIGLPN…LLDQVWQLLG (169 aa)). ATP-binding positions include 166 to 173 (GLPNAGKS), 191 to 195 (FTTLV), 213 to 216 (DIPG), 280 to 283 (NKLE), and 309 to 311 (SAV). Residues serine 173 and threonine 193 each contribute to the Mg(2+) site.

The protein belongs to the TRAFAC class OBG-HflX-like GTPase superfamily. OBG GTPase family. As to quaternary structure, monomer. It depends on Mg(2+) as a cofactor.

It localises to the cytoplasm. An essential GTPase which binds GTP, GDP and possibly (p)ppGpp with moderate affinity, with high nucleotide exchange rates and a fairly low GTP hydrolysis rate. Plays a role in control of the cell cycle, stress response, ribosome biogenesis and in those bacteria that undergo differentiation, in morphogenesis control. The chain is GTPase Obg from Synechococcus sp. (strain WH7803).